A 176-amino-acid chain; its full sequence is V-type proton ATPase 16 kDa proteolipid subunit (176 aa).

Residues methionine 1–proline 17 lie on the Lumenal side of the membrane. The chain crosses the membrane as a helical span at residues phenylalanine 18–glycine 38. The Cytoplasmic portion of the chain corresponds to threonine 39–phenylalanine 62. A helical transmembrane segment spans residues proline 63–isoleucine 83. Topologically, residues asparagine 84 to aspartate 98 are lumenal. A helical transmembrane segment spans residues leucine 99–serine 119. Topologically, residues glycine 120–serine 136 are cytoplasmic. The chain crosses the membrane as a helical span at residues methionine 137–isoleucine 157. At methionine 158 to serine 176 the chain is on the lumenal side.

This sequence belongs to the V-ATPase proteolipid subunit family. As to quaternary structure, V-ATPase is a heteromultimeric enzyme composed of a peripheral catalytic V1 complex (main components: subunits A, B, C, D, E, and F) attached to an integral membrane V0 proton pore complex (main component: the proteolipid protein; which is present as a hexamer that forms the proton-conducting pore).

It is found in the vacuole membrane. Its function is as follows. Proton-conducting pore forming subunit of the membrane integral V0 complex of vacuolar ATPase. V-ATPase is responsible for acidifying a variety of intracellular compartments in eukaryotic cells. This chain is V-type proton ATPase 16 kDa proteolipid subunit (VMA3), found in Entamoeba dispar.